The primary structure comprises 152 residues: Transcriptional repressor NrdR (152 aa).

Residues 3–34 (CPFCNHGELKVIDSRNAPEANAIKRRRECLKC) fold into a zinc finger. Residues 48-138 (LQVLKRDGRY…VYRRFKDVGE (91 aa)) form the ATP-cone domain.

This sequence belongs to the NrdR family. It depends on Zn(2+) as a cofactor.

Functionally, negatively regulates transcription of bacterial ribonucleotide reductase nrd genes and operons by binding to NrdR-boxes. This is Transcriptional repressor NrdR from Chlamydia pneumoniae (Chlamydophila pneumoniae).